We begin with the raw amino-acid sequence, 349 residues long: tRNA pseudouridine synthase D (349 aa).

Substrate is bound at residue phenylalanine 26. The active-site Nucleophile is aspartate 79. Asparagine 128 provides a ligand contact to substrate. Residues 154–302 enclose the TRUD domain; the sequence is GVPNYFGEQR…VEGCRRAILV (149 aa). Phenylalanine 328 contacts substrate.

It belongs to the pseudouridine synthase TruD family.

It catalyses the reaction uridine(13) in tRNA = pseudouridine(13) in tRNA. Responsible for synthesis of pseudouridine from uracil-13 in transfer RNAs. This chain is tRNA pseudouridine synthase D, found in Photorhabdus laumondii subsp. laumondii (strain DSM 15139 / CIP 105565 / TT01) (Photorhabdus luminescens subsp. laumondii).